Here is a 336-residue protein sequence, read N- to C-terminus: MTEPKDIVLKESEEVEGTPIEGPWLDEVSSLEEVLDYYERIGFQATHLGKAIEIWKKVEEKRARGEEVRVFLGYTSNIISSGLREIIAWLVKEGKVDVIVTTAGGIEEDFIKALKPFILGDWNVNDALMREKGINRIGNIFVPNDRYIEFEKYMIPFFERVLEIEKERGKPLTASEFIYEMGRFMDEKLGKEKEKSVIYWAYKRNVPIFCPAITDGSIGDMLYFFKEERGDRELIIDIANDIVKLNNLAVTAKETASIILGGSLPKHAIINANLFRGGTDYAIYVTTAIPWDGSLSGAPPSEGVSWGKIRAKADYVEIWADATLVFPLLVWKVMRS.

The active-site Nucleophile is the lysine 308.

This sequence belongs to the deoxyhypusine synthase family. It depends on NAD(+) as a cofactor.

It catalyses the reaction [eIF5A protein]-L-lysine + spermidine = [eIF5A protein]-deoxyhypusine + propane-1,3-diamine. The protein operates within protein modification; eIF5A hypusination. In terms of biological role, catalyzes the NAD-dependent oxidative cleavage of spermidine and the subsequent transfer of the butylamine moiety of spermidine to the epsilon-amino group of a specific lysine residue of the eIF-5A precursor protein to form the intermediate deoxyhypusine residue. The protein is Probable deoxyhypusine synthase of Thermococcus gammatolerans (strain DSM 15229 / JCM 11827 / EJ3).